A 220-amino-acid polypeptide reads, in one-letter code: Urease accessory protein UreG (220 aa).

18–25 contacts GTP; sequence GPVGSGKT.

The protein belongs to the SIMIBI class G3E GTPase family. UreG subfamily. Homodimer. UreD, UreF and UreG form a complex that acts as a GTP-hydrolysis-dependent molecular chaperone, activating the urease apoprotein by helping to assemble the nickel containing metallocenter of UreC. The UreE protein probably delivers the nickel.

The protein resides in the cytoplasm. In terms of biological role, facilitates the functional incorporation of the urease nickel metallocenter. This process requires GTP hydrolysis, probably effectuated by UreG. The sequence is that of Urease accessory protein UreG from Yersinia pestis.